Consider the following 1057-residue polypeptide: Hemophilin receptor (1057 aa).

Positions 168–285 (KVYDANRSSV…VGGAVVVKTL (118 aa)) constitute a TBDR plug domain. The TBDR beta-barrel domain occupies 296–1057 (SFGAELKVEG…TMKISWTTKF (762 aa)).

This sequence belongs to the TonB-dependent receptor family.

The protein localises to the cell outer membrane. Functionally, part of a high affinity heme acquisition system. Functions as a gateway for heme entry into the bacterial cell, enabling growth on hemoprotein sources. Can acquire heme directly from hemoprotein reservoirs, however, HphA likely enhances the efficiency of this process by delivering heme to HphR. Is essential for virulence, bacterial dissemination and growth in the blood. The chain is Hemophilin receptor from Acinetobacter baumannii.